Reading from the N-terminus, the 112-residue chain is UPF0060 membrane protein CMS0846 (112 aa).

The next 4 membrane-spanning stretches (helical) occupy residues 6–26, 32–52, 61–81, and 87–107; these read VILF…IWQA, PFWW…IATL, ILAA…TVVD, and RWDV…MAAP.

It belongs to the UPF0060 family.

The protein resides in the cell membrane. The polypeptide is UPF0060 membrane protein CMS0846 (Clavibacter sepedonicus (Clavibacter michiganensis subsp. sepedonicus)).